The sequence spans 374 residues: Chaperone protein DnaJ (374 aa).

In terms of domain architecture, J spans 5–70 (DYYEVLGLEK…DKKANYDRFG (66 aa)). The segment at 137-219 (GVEKSINITR…CHGAGHVRKK (83 aa)) adopts a CR-type zinc-finger fold. Positions 150, 153, 167, 170, 193, 196, 207, and 210 each coordinate Zn(2+). CXXCXGXG motif repeat units lie at residues 150-157 (CETCGGTG), 167-174 (CDKCGGTG), 193-200 (CDKCGGRG), and 207-214 (CHECHGAG).

Belongs to the DnaJ family. In terms of assembly, homodimer. Zn(2+) is required as a cofactor.

It localises to the cytoplasm. Its function is as follows. Participates actively in the response to hyperosmotic and heat shock by preventing the aggregation of stress-denatured proteins and by disaggregating proteins, also in an autonomous, DnaK-independent fashion. Unfolded proteins bind initially to DnaJ; upon interaction with the DnaJ-bound protein, DnaK hydrolyzes its bound ATP, resulting in the formation of a stable complex. GrpE releases ADP from DnaK; ATP binding to DnaK triggers the release of the substrate protein, thus completing the reaction cycle. Several rounds of ATP-dependent interactions between DnaJ, DnaK and GrpE are required for fully efficient folding. Also involved, together with DnaK and GrpE, in the DNA replication of plasmids through activation of initiation proteins. This is Chaperone protein DnaJ from Clostridium acetobutylicum (strain ATCC 824 / DSM 792 / JCM 1419 / IAM 19013 / LMG 5710 / NBRC 13948 / NRRL B-527 / VKM B-1787 / 2291 / W).